A 376-amino-acid chain; its full sequence is Chorismate synthase ARO2 (376 aa).

Ser2 is subject to N-acetylserine. Residue His17 is part of the active site. The segment at 39-61 is disordered; that stretch reads IQPQLTRRRPGQSKLSTPRDEKD. Active-site residues include His104 and Asp339.

This sequence belongs to the chorismate synthase family. As to quaternary structure, homotetramer.

The enzyme catalyses 5-O-(1-carboxyvinyl)-3-phosphoshikimate = chorismate + phosphate. It catalyses the reaction FMNH2 + NADP(+) = FMN + NADPH + 2 H(+). Its pathway is metabolic intermediate biosynthesis; chorismate biosynthesis; chorismate from D-erythrose 4-phosphate and phosphoenolpyruvate: step 7/7. Functionally, bifunctional chorismate synthase and flavin reductase that catalyzes the conversion of 5-enolpyruvylshikimate 3-phosphate (EPSP) to form chorismate, which is the last common intermediate in the synthesis of the three aromatic amino acids phenylalanine, tyrosine and tryptophan. Also acts as a flavin reductase (FR) able to generate reduced flavin mononucleotide in the presence of NADPH. The protein is Chorismate synthase ARO2 of Saccharomyces cerevisiae (strain ATCC 204508 / S288c) (Baker's yeast).